We begin with the raw amino-acid sequence, 221 residues long: ATP phosphoribosyltransferase (221 aa).

Belongs to the ATP phosphoribosyltransferase family. Short subfamily. In terms of assembly, heteromultimer composed of HisG and HisZ subunits.

It is found in the cytoplasm. The catalysed reaction is 1-(5-phospho-beta-D-ribosyl)-ATP + diphosphate = 5-phospho-alpha-D-ribose 1-diphosphate + ATP. It functions in the pathway amino-acid biosynthesis; L-histidine biosynthesis; L-histidine from 5-phospho-alpha-D-ribose 1-diphosphate: step 1/9. Functionally, catalyzes the condensation of ATP and 5-phosphoribose 1-diphosphate to form N'-(5'-phosphoribosyl)-ATP (PR-ATP). Has a crucial role in the pathway because the rate of histidine biosynthesis seems to be controlled primarily by regulation of HisG enzymatic activity. In Rhizorhabdus wittichii (strain DSM 6014 / CCUG 31198 / JCM 15750 / NBRC 105917 / EY 4224 / RW1) (Sphingomonas wittichii), this protein is ATP phosphoribosyltransferase.